The sequence spans 723 residues: Polyribonucleotide nucleotidyltransferase (723 aa).

Mg(2+) is bound by residues D488 and D494. The KH domain occupies 555-614 (PKIITLNIKPEKIKDVIGPGGKQINAIIDETGVKIDIEQDGTVYIASQDQAMNRKAIAII). In terms of domain architecture, S1 motif spans 624–692 (GEVYTGKVRR…QQGRVNLSRK (69 aa)). A disordered region spans residues 692–723 (KALLEKKEQPEGDKKPQAEKKFYPKTKKPESK). Residues 693 to 723 (ALLEKKEQPEGDKKPQAEKKFYPKTKKPESK) show a composition bias toward basic and acidic residues.

Belongs to the polyribonucleotide nucleotidyltransferase family. It depends on Mg(2+) as a cofactor.

It is found in the cytoplasm. The catalysed reaction is RNA(n+1) + phosphate = RNA(n) + a ribonucleoside 5'-diphosphate. In terms of biological role, involved in mRNA degradation. Catalyzes the phosphorolysis of single-stranded polyribonucleotides processively in the 3'- to 5'-direction. This chain is Polyribonucleotide nucleotidyltransferase, found in Listeria monocytogenes serovar 1/2a (strain ATCC BAA-679 / EGD-e).